The following is a 647-amino-acid chain: DNA topoisomerase 4 subunit B (647 aa).

Residues Tyr11, Asn51, Asp78, 118–124 (GLHGVGS), and Lys344 each bind ATP. The segment covering 391-401 (AARKARDESRN) has biased composition (basic and acidic residues). The disordered stretch occupies residues 391–421 (AARKARDESRNGKKNKKDKGLLSGKLTPAQS). The 115-residue stretch at 427–541 (NELYLVEGDS…AGHVYIALPP (115 aa)) folds into the Toprim domain. Glu433, Asp506, and Asp508 together coordinate Mg(2+).

Belongs to the type II topoisomerase family. ParE type 2 subfamily. In terms of assembly, heterotetramer composed of ParC and ParE. Mg(2+) serves as cofactor. Requires Mn(2+) as cofactor. It depends on Ca(2+) as a cofactor.

The enzyme catalyses ATP-dependent breakage, passage and rejoining of double-stranded DNA.. Its activity is regulated as follows. Inhibited by quinolones, such as levofloxacin. Its function is as follows. Topoisomerase IV is essential for chromosome segregation. It relaxes supercoiled DNA. Performs the decatenation events required during the replication of a circular DNA molecule. The chain is DNA topoisomerase 4 subunit B from Streptococcus pneumoniae serotype 4 (strain ATCC BAA-334 / TIGR4).